A 615-amino-acid polypeptide reads, in one-letter code: RUN domain-containing protein 1 (615 aa).

The segment at 15-41 (TAVGPKAKDEEEEEEEEESLPPCETVR) is disordered. Residues 24–33 (EEEEEEEEES) are compositionally biased toward acidic residues. Residue Ser-73 is modified to Phosphoserine. Coiled coils occupy residues 76 to 102 (DATVRTLRRLEAERRQLDSALLALSSH) and 163 to 238 (RVRG…NLNE). The disordered stretch occupies residues 147 to 180 (DPCGGDESDVLPGDRPRVRGEDQSEQEKRERLET). The segment covering 158–180 (PGDRPRVRGEDQSEQEKRERLET) has biased composition (basic and acidic residues). Positions 423-604 (ELTTVVRKEL…LKFSLPVDLA (182 aa)) constitute an RUN domain. Ser-499 is modified (phosphoserine).

May play a role as p53/TP53 inhibitor and thus may have oncogenic activity. This Mus musculus (Mouse) protein is RUN domain-containing protein 1 (Rundc1).